The chain runs to 671 residues: UvrABC system protein B (671 aa).

In terms of domain architecture, Helicase ATP-binding spans 25-412 (EGIEAGLSHQ…AGRVVEQVVR (388 aa)). An ATP-binding site is contributed by 38 to 45 (GVTGSGKT). Residues 91 to 114 (YYDYYQPEAYVPSSDTFIEKDASI) carry the Beta-hairpin motif. The region spanning 429-582 (QVDDLLSEIR…QIAFNEANGI (154 aa)) is the Helicase C-terminal domain. One can recognise a UVR domain in the interval 632 to 667 (TKRIKQLEEKMMQFARDLEFEAAAQLRDEIAQLRER).

This sequence belongs to the UvrB family. In terms of assembly, forms a heterotetramer with UvrA during the search for lesions. Interacts with UvrC in an incision complex.

The protein resides in the cytoplasm. Its function is as follows. The UvrABC repair system catalyzes the recognition and processing of DNA lesions. A damage recognition complex composed of 2 UvrA and 2 UvrB subunits scans DNA for abnormalities. Upon binding of the UvrA(2)B(2) complex to a putative damaged site, the DNA wraps around one UvrB monomer. DNA wrap is dependent on ATP binding by UvrB and probably causes local melting of the DNA helix, facilitating insertion of UvrB beta-hairpin between the DNA strands. Then UvrB probes one DNA strand for the presence of a lesion. If a lesion is found the UvrA subunits dissociate and the UvrB-DNA preincision complex is formed. This complex is subsequently bound by UvrC and the second UvrB is released. If no lesion is found, the DNA wraps around the other UvrB subunit that will check the other stand for damage. This chain is UvrABC system protein B, found in Pseudomonas putida (strain ATCC 47054 / DSM 6125 / CFBP 8728 / NCIMB 11950 / KT2440).